The primary structure comprises 210 residues: Pyridoxine/pyridoxamine 5'-phosphate oxidase (210 aa).

Substrate is bound by residues 7-10 and Lys65; that span reads RDEY. Residues 60-65, 75-76, Arg81, Lys82, and Gln104 each bind FMN; these read RMVLLK and FT. The substrate site is built by Tyr122, Arg126, and Ser130. FMN is bound by residues 139–140 and Trp183; that span reads QS. Substrate is bound at residue 189-191; it reads RLH. Arg193 contributes to the FMN binding site.

It belongs to the pyridoxamine 5'-phosphate oxidase family. Homodimer. FMN is required as a cofactor.

It catalyses the reaction pyridoxamine 5'-phosphate + O2 + H2O = pyridoxal 5'-phosphate + H2O2 + NH4(+). The catalysed reaction is pyridoxine 5'-phosphate + O2 = pyridoxal 5'-phosphate + H2O2. The protein operates within cofactor metabolism; pyridoxal 5'-phosphate salvage; pyridoxal 5'-phosphate from pyridoxamine 5'-phosphate: step 1/1. It functions in the pathway cofactor metabolism; pyridoxal 5'-phosphate salvage; pyridoxal 5'-phosphate from pyridoxine 5'-phosphate: step 1/1. In terms of biological role, catalyzes the oxidation of either pyridoxine 5'-phosphate (PNP) or pyridoxamine 5'-phosphate (PMP) into pyridoxal 5'-phosphate (PLP). The protein is Pyridoxine/pyridoxamine 5'-phosphate oxidase of Haemophilus influenzae (strain 86-028NP).